The sequence spans 522 residues: MSLSFLLRVAGLFFLQFNSAQAKSQVHEQWHVSSIPNVPAGYTGSLHSGYLNLTDKLEGDLFFTLYGSENEVHQNRTIIWLNGGPGCSSEDGSMLELGPLRLTNDSLVYYNAASWVRLGNVLFVDQPMGTGFSFADTRDAILNDNEKMSNDFAYFLQEFVKAFPEYATDTWYIAGESFAGQYIPAIAKKVIDSDIVNLSGIAIGNGWIEPASHYLTYLDYLVERGLLERGSALFEALTAVQAKCLMSLEQSASGMLEDENSCDKYLFDILFSVSDKSGEFCFNMYDVTLTSPYPSCGMEWPLELPALTDFLSSPDVMKALHVASDKVSRWEECSSLVSNFYADTNVFRTRFTIAELLEEIPVMLFYGENDFLCNYVSGEFLISNLEWSGKRGFENASNADWYPRYSEANTLEYGQYAAAAGIIHSERNLTYATIRNSSHMVPYDHPYEMLALVSAFFDNDFSQILMLPDPVTIVPNHSFLSIFLWVMAGILAFSAIGAICYYSYRHIRSRYDSYTPIQEESA.

The first 22 residues, 1–22, serve as a signal peptide directing secretion; that stretch reads MSLSFLLRVAGLFFLQFNSAQA. The Lumenal segment spans residues 23–478; sequence KSQVHEQWHV…DPVTIVPNHS (456 aa). N-linked (GlcNAc...) asparagine glycans are attached at residues Asn-52, Asn-75, and Asn-104. Ser-177 is an active-site residue. Asn-197 carries N-linked (GlcNAc...) asparagine glycosylation. Asp-370 is an active-site residue. N-linked (GlcNAc...) asparagine glycosylation is found at Asn-395, Asn-428, and Asn-436. Residue His-439 is part of the active site. Residues 479–499 form a helical membrane-spanning segment; sequence FLSIFLWVMAGILAFSAIGAI. Residues 500-522 are Cytoplasmic-facing; sequence CYYSYRHIRSRYDSYTPIQEESA.

It belongs to the peptidase S10 family.

It is found in the golgi apparatus. Its subcellular location is the trans-Golgi network membrane. It catalyses the reaction Preferential release of a C-terminal arginine or lysine residue.. Functionally, protease with a carboxypeptidase B-like function involved in the C-terminal processing of the lysine and arginine residues from protein precursors. Promotes cell fusion and is involved in the programmed cell death. This is Pheromone-processing carboxypeptidase kex1 (kex1) from Schizosaccharomyces japonicus (strain yFS275 / FY16936) (Fission yeast).